A 161-amino-acid polypeptide reads, in one-letter code: Small ribosomal subunit protein uS9 (161 aa).

This sequence belongs to the universal ribosomal protein uS9 family.

This is Small ribosomal subunit protein uS9 from Rickettsia canadensis (strain McKiel).